Consider the following 149-residue polypeptide: 3-dehydroquinate dehydratase (149 aa).

The active-site Proton acceptor is the Tyr-22. Residues Asn-74, His-80, and Asp-87 each contribute to the substrate site. The active-site Proton donor is His-100. Substrate is bound by residues 101–102 (MS) and Arg-111.

This sequence belongs to the type-II 3-dehydroquinase family. As to quaternary structure, homododecamer.

It carries out the reaction 3-dehydroquinate = 3-dehydroshikimate + H2O. Its pathway is metabolic intermediate biosynthesis; chorismate biosynthesis; chorismate from D-erythrose 4-phosphate and phosphoenolpyruvate: step 3/7. Its function is as follows. Catalyzes a trans-dehydration via an enolate intermediate. The protein is 3-dehydroquinate dehydratase of Leptothrix cholodnii (strain ATCC 51168 / LMG 8142 / SP-6) (Leptothrix discophora (strain SP-6)).